Here is a 200-residue protein sequence, read N- to C-terminus: TATA-box-binding protein (200 aa).

Tandem repeats lie at residues 25 to 101 and 115 to 192.

It belongs to the TBP family. In terms of assembly, belongs to the TFIID complex together with the TBP-associated factors (TAFs). Binds DNA as monomer.

It localises to the nucleus. Functionally, general transcription factor that functions at the core of the DNA-binding multiprotein factor TFIID. Binding of TFIID to the TATA box is the initial transcriptional step of the pre-initiation complex (PIC), playing a role in the activation of eukaryotic genes transcribed by RNA polymerase II. The polypeptide is TATA-box-binding protein (Nicotiana tabacum (Common tobacco)).